The sequence spans 1042 residues: Putative type I restriction enzyme MjaIXP endonuclease subunit (1042 aa).

The Helicase ATP-binding domain maps to 323-487 (GETPEDRRIG…FLVFGDYISA (165 aa)). The short motif at 439-442 (DEAH) is the DEAH box element. Residues 551 to 731 (LTEDYLSKVS…DIKVVIEEMK (181 aa)) enclose the Helicase C-terminal domain.

The protein belongs to the HsdR family. The type I restriction/modification system is composed of three polypeptides R, M and S.

The catalysed reaction is Endonucleolytic cleavage of DNA to give random double-stranded fragments with terminal 5'-phosphates, ATP is simultaneously hydrolyzed.. In terms of biological role, the restriction (R) subunit of a type I restriction enzyme that recognizes 5'-CCAN(5)GTR-3' and cleaves a random distance away. The R subunit is required for both nuclease and ATPase activities, but not for modification. After locating a non-methylated recognition site, the enzyme complex serves as a molecular motor that translocates DNA in an ATP-dependent manner until a collision occurs that triggers cleavage. This Methanocaldococcus jannaschii (strain ATCC 43067 / DSM 2661 / JAL-1 / JCM 10045 / NBRC 100440) (Methanococcus jannaschii) protein is Putative type I restriction enzyme MjaIXP endonuclease subunit.